Reading from the N-terminus, the 376-residue chain is Putative cytosolic 5'-nucleotidase 3 (376 aa).

Asp-119 (nucleophile) is an active-site residue. Mg(2+) contacts are provided by Asp-119 and Asp-121. Asp-121 serves as the catalytic Proton donor. Residues Glu-168, Ser-189, 236 to 237 (SA), and Lys-286 contribute to the substrate site. Asp-312 is a Mg(2+) binding site.

The protein belongs to the pyrimidine 5'-nucleotidase family.

Its subcellular location is the cytoplasm. It catalyses the reaction a ribonucleoside 5'-phosphate + H2O = a ribonucleoside + phosphate. The chain is Putative cytosolic 5'-nucleotidase 3 from Caenorhabditis elegans.